The primary structure comprises 118 residues: Large ribosomal subunit protein bL20 (118 aa).

It belongs to the bacterial ribosomal protein bL20 family.

Binds directly to 23S ribosomal RNA and is necessary for the in vitro assembly process of the 50S ribosomal subunit. It is not involved in the protein synthesizing functions of that subunit. The chain is Large ribosomal subunit protein bL20 from Lactobacillus acidophilus (strain ATCC 700396 / NCK56 / N2 / NCFM).